The chain runs to 507 residues: Protein phosphatase 1J (507 aa).

2 disordered regions span residues 1–102 and 197–220; these read MLNR…RLPW and LCLP…PQSC. A compositionally biased stretch (low complexity) spans 14–23; it reads SSGGTSSQRS. Position 41 is a phosphothreonine (threonine 41). Positions 59 to 73 are enriched in polar residues; it reads TAETTVSFSRPTFLQ. Phosphoserine occurs at positions 65 and 75. Residues 103–499 enclose the PPM-type phosphatase domain; that stretch reads STGYAEVINA…DDISVFVIPL (397 aa). Over residues 199 to 212 the composition is skewed to low complexity; the sequence is LPSTPGTPGAPSPS.

This sequence belongs to the PP2C family. As to quaternary structure, interacts with UBE2I/UBC9. In terms of tissue distribution, specifically expressed in the testicular germ cells.

It carries out the reaction O-phospho-L-seryl-[protein] + H2O = L-seryl-[protein] + phosphate. The catalysed reaction is O-phospho-L-threonyl-[protein] + H2O = L-threonyl-[protein] + phosphate. This Mus musculus (Mouse) protein is Protein phosphatase 1J (Ppm1j).